We begin with the raw amino-acid sequence, 593 residues long: Vitamin H transporter (593 aa).

Residues 1–121 (MTISNKSWRS…TTQTKAERRL (121 aa)) are Extracellular-facing. Residues Ser32, Ser33, and Ser43 each carry the phosphoserine modification. The chain crosses the membrane as a helical span at residues 122–142 (LYKLDIIIALYFFMLCWSKSV). Residues 143–166 (DLNNYTNAYVSNMKEDLNMKGNDY) lie on the Cytoplasmic side of the membrane. A helical transmembrane segment spans residues 167 to 187 (VYTSTIANVGAIVFQLPFMYL). Over 188 to 190 (LPR) the chain is Extracellular. The chain crosses the membrane as a helical span at residues 191–211 (FPSHIILPVMDLGWTWFTFAC). Residues 212-224 (YRANSLAELRAYR) are Cytoplasmic-facing. A helical transmembrane segment spans residues 225–245 (FILSAFGAAYYPVSQYILGCW). The Extracellular segment spans residues 246–291 (YAPDEINSRVCLFFCGQQLGSVTSGLLQSRIFKSLNGVHGLAGWRW). Residues 292–312 (MFLIDAIAISLPTAIIGFFVI) form a helical membrane-spanning segment. The Cytoplasmic portion of the chain corresponds to 313–361 (PGVPSKCYSLFLTDEEIRIARARNKRNQIKDGVDKSKLAPLWSRKLWKK). Residues 362 to 382 (VFCTPAFWVLVVFDTCSWNNM) traverse the membrane as a helical segment. At 383–408 (TAYSGSYTLWLKSNTKYSIAQVNNLS) the chain is on the extracellular side. Residues 409-429 (VIPACLGFAYVIFCAFGADLF) traverse the membrane as a helical segment. The Cytoplasmic portion of the chain corresponds to 430–432 (RCK). A helical transmembrane segment spans residues 433–453 (WIFMVFAAIMNTVSCALLIKW). Residues 454-460 (DIPSKAK) are Extracellular-facing. A helical membrane pass occupies residues 461–481 (WYAFFTTYFSVAASPCLWSFI). The Cytoplasmic segment spans residues 482-492 (NDFLRFDPQVK). Residues 493-513 (AITWIAIYSFSQSTYAWIPTL) traverse the membrane as a helical segment. Residues 514–526 (AWPTVESPRFKTG) are Extracellular-facing. The helical transmembrane segment at 527-547 (YTVSLIFGAIYGLWTFVVLFF) threads the bilayer. Topologically, residues 548 to 593 (YKRNEKKHALGNGIILYDSNKGEELPEFVKKNMEERDGYYYLKRSS) are cytoplasmic.

This sequence belongs to the major facilitator superfamily. Allantoate permease family.

Its subcellular location is the cell membrane. Functionally, involved in uptake of biotin with the concomitant entry of protons. This chain is Vitamin H transporter (VHT1), found in Saccharomyces cerevisiae (strain ATCC 204508 / S288c) (Baker's yeast).